A 357-amino-acid chain; its full sequence is Aspartate-semialdehyde dehydrogenase (357 aa).

Thr12, Gly13, Thr14, Val15, Ser37, Ser40, Leu84, and Asp85 together coordinate NADP(+). The active-site Acyl-thioester intermediate is Cys151. Residue Gly183 participates in NADP(+) binding. The Proton acceptor role is filled by His247. Ser323 bears the Phosphoserine mark. Residue Asn335 coordinates NADP(+).

It belongs to the aspartate-semialdehyde dehydrogenase family.

The protein resides in the cytoplasm. It is found in the cytosol. It localises to the nucleus. It catalyses the reaction L-aspartate 4-semialdehyde + phosphate + NADP(+) = 4-phospho-L-aspartate + NADPH + H(+). It participates in amino-acid biosynthesis; L-methionine biosynthesis via de novo pathway; L-homoserine from L-aspartate: step 2/3. Its pathway is amino-acid biosynthesis; L-threonine biosynthesis; L-threonine from L-aspartate: step 2/5. Its function is as follows. Catalyzes the NADPH-dependent formation of L-aspartate 4-semialdehyde (L-ASA) by the reductive dephosphorylation of 4-phospho-L-aspartate. Mediates the second step in the biosynthesis of amino acids that derive from aspartate (the aspartate family of amino acids), including methioinine and threonine, the latter of which is a precursor to isoleucine. In Schizosaccharomyces pombe (strain 972 / ATCC 24843) (Fission yeast), this protein is Aspartate-semialdehyde dehydrogenase.